We begin with the raw amino-acid sequence, 200 residues long: Large ribosomal subunit protein uL4 (200 aa).

Residues 42-65 (TRAQKTRSEVSGGGAKPWRQKGTG) form a disordered region.

The protein belongs to the universal ribosomal protein uL4 family. Part of the 50S ribosomal subunit.

Its function is as follows. One of the primary rRNA binding proteins, this protein initially binds near the 5'-end of the 23S rRNA. It is important during the early stages of 50S assembly. It makes multiple contacts with different domains of the 23S rRNA in the assembled 50S subunit and ribosome. Forms part of the polypeptide exit tunnel. The polypeptide is Large ribosomal subunit protein uL4 (Vibrio campbellii (strain ATCC BAA-1116)).